The primary structure comprises 170 residues: NADH-quinone oxidoreductase subunit B (170 aa).

Positions 46, 47, 111, and 141 each coordinate [4Fe-4S] cluster.

The protein belongs to the complex I 20 kDa subunit family. In terms of assembly, NDH-1 is composed of 14 different subunits. Subunits NuoB, C, D, E, F, and G constitute the peripheral sector of the complex. The cofactor is [4Fe-4S] cluster.

It is found in the cell membrane. The enzyme catalyses a quinone + NADH + 5 H(+)(in) = a quinol + NAD(+) + 4 H(+)(out). NDH-1 shuttles electrons from NADH, via FMN and iron-sulfur (Fe-S) centers, to quinones in the respiratory chain. The immediate electron acceptor for the enzyme in this species is believed to be a menaquinone. Couples the redox reaction to proton translocation (for every two electrons transferred, four hydrogen ions are translocated across the cytoplasmic membrane), and thus conserves the redox energy in a proton gradient. The chain is NADH-quinone oxidoreductase subunit B from Geobacillus sp. (strain WCH70).